Here is a 761-residue protein sequence, read N- to C-terminus: Pleckstrin homology domain-containing family M member 3 (761 aa).

Phosphoserine is present on Ser-132. 2 consecutive PH domains span residues 211-308 and 361-456; these read NILK…EVVH and NILK…IAAN. The segment at 669–722 adopts a Phorbol-ester/DAG-type zinc-finger fold; sequence SHVYSCSLCSQKGFICEICNNGEILYPFEDISTSRCESCGAVFHSECKEKSVPC.

In terms of assembly, interacts with AKT1.

It is found in the cytoplasm. It localises to the golgi apparatus. Its subcellular location is the cell membrane. Involved in skeletal muscle differentiation. May act as a scaffold protein for AKT1 during muscle differentiation. The polypeptide is Pleckstrin homology domain-containing family M member 3 (Homo sapiens (Human)).